A 310-amino-acid polypeptide reads, in one-letter code: Small ribosomal subunit biogenesis GTPase RsgA 2 (310 aa).

In terms of domain architecture, CP-type G spans 77–238 (LSKQSHILAA…IIDTPGIKGF (162 aa)). GTP-binding positions include 126 to 129 (NKVD) and 180 to 188 (GHSGVGKST). 4 residues coordinate Zn(2+): C262, C267, H269, and C275.

This sequence belongs to the TRAFAC class YlqF/YawG GTPase family. RsgA subfamily. Monomer. Associates with 30S ribosomal subunit, binds 16S rRNA. Zn(2+) serves as cofactor.

It localises to the cytoplasm. One of several proteins that assist in the late maturation steps of the functional core of the 30S ribosomal subunit. Helps release RbfA from mature subunits. May play a role in the assembly of ribosomal proteins into the subunit. Circularly permuted GTPase that catalyzes slow GTP hydrolysis, GTPase activity is stimulated by the 30S ribosomal subunit. In Bacteroides thetaiotaomicron (strain ATCC 29148 / DSM 2079 / JCM 5827 / CCUG 10774 / NCTC 10582 / VPI-5482 / E50), this protein is Small ribosomal subunit biogenesis GTPase RsgA 2.